The primary structure comprises 1363 residues: Homeobox protein 13 (1363 aa).

The stretch at 15–73 forms a coiled coil; sequence FVMEQIQQQQQQQQQQQQQQQQQQQQQQQQQQQQLQQQQQQQQQQQQQQQQQQQQQQQN. Disordered stretches follow at residues 66 to 96, 120 to 177, 308 to 437, 621 to 731, 765 to 818, 857 to 911, 1001 to 1137, 1166 to 1202, and 1270 to 1341; these read QQQQ…STVP, SQHA…INGS, INGT…YHGG, LNSP…QHQQ, HHHH…PQHS, SINS…SNSI, QNYN…TLIN, NFIN…KRMR, and ISFG…TLIS. A compositionally biased stretch (polar residues) spans 73–96; sequence NPKMNNQPNETRLPSPPLLNSTVP. A compositionally biased stretch (low complexity) spans 132-147; it reads SLNSSNNNNNNNFNNS. Over residues 148 to 158 the composition is skewed to polar residues; that stretch reads RPTFSSCSGNS. 2 stretches are compositionally biased toward low complexity: residues 159–177 and 315–326; these read NNTT…INGS and SNHSNNNNNNNN. A compositionally biased stretch (basic residues) spans 327-339; it reads NHHHHHHHHHQKR. The segment covering 348 to 378 has biased composition (low complexity); that stretch reads TNHLTPLPLLHKHTNNNNNINNNNNHNHNNI. The span at 379-393 shows a compositional bias: polar residues; it reads LGSPNQLNRSQDFTS. Low complexity-rich tracts occupy residues 394–408, 415–426, 641–693, 709–731, and 770–793; these read KNNN…NNKI, NKGSPNQNSSEN, NNNS…NNNI, HHQQ…QHQQ, and QQQQ…SNHN. Residues 738-789 are a coiled coil; that stretch reads QQQLQIQYQQQQTHNNNLNQTQQLYYNHHHHQQQQQQQQQQQQHNNNNNNNN. 2 stretches are compositionally biased toward polar residues: residues 794 to 818 and 857 to 883; these read SVLT…PQHS and SINS…QKNR. 3 stretches are compositionally biased toward low complexity: residues 889-911, 1001-1031, and 1045-1063; these read ILNS…SNSI, QNYN…NNNF, and NINN…NNNN. Residues 1064-1078 show a composition bias toward basic and acidic residues; the sequence is KNDKNESEFESKEKL. Residues 1081-1095 are compositionally biased toward polar residues; it reads PFGSSIPNIVNNEQL. 3 stretches are compositionally biased toward low complexity: residues 1096-1116, 1123-1137, and 1166-1177; these read SPYS…PQWS, TSSS…TLIN, and NFINNNSNNNNN. Residues 1179–1195 are compositionally biased toward acidic residues; it reads EIDDDDEDGIDGIEGED. The homeobox DNA-binding region spans 1198 to 1261; it reads KKRMRKTTRP…NRRTKDKLKN (64 aa). Residues 1275–1294 show a composition bias toward low complexity; the sequence is SSTSSTQTSTNSPSSQLSPL. Residues 1297–1316 are compositionally biased toward polar residues; the sequence is NMNNNDQQSISTPSLILSQI. Low complexity predominate over residues 1317–1334; that stretch reads NNNQNNNQNNNNNNNTNN.

It localises to the nucleus. Functionally, putative transcription factor. This is Homeobox protein 13 (hbx13) from Dictyostelium discoideum (Social amoeba).